Reading from the N-terminus, the 385-residue chain is dTDP-4-dehydro-2,3,6-trideoxy-D-glucose 4-aminotransferase (385 aa).

Residue Lys-182 is modified to N6-(pyridoxal phosphate)lysine.

Belongs to the DegT/DnrJ/EryC1 family. As to quaternary structure, homodimer. Pyridoxal 5'-phosphate is required as a cofactor.

The catalysed reaction is dTDP-4-amino-2,3,4,6-tetradeoxy-alpha-D-erythro-hexopyranose + 2-oxoglutarate = dTDP-4-dehydro-2,3,6-trideoxy-alpha-D-hexopyranose + L-glutamate. Functionally, involved in the biosynthesis of forosamine ((4-dimethylamino)-2,3,4,6-tetradeoxy-alpha-D-threo-hexopyranose), a highly deoxygenated sugar component of several bioactive natural products such as the insecticidal spinosyns A and D. In the presence of pyridoxal 5'-phosphate (PLP) and alpha-ketoglutarate, catalyzes the C-4 transamination of dTDP-4-keto-2,3,6-trideoxy-alpha-D-glucose to yield dTDP-4-amino-2,3,4,6-tetradeoxy-alpha-D-glucose. It can also use pyruvate, but less efficiently than alpha-ketoglutarate. Also able to catalyze the C-4 transamination of dTDP-4-keto-2,6-dideoxy-alpha-D-glucose to yield dTDP-4-amino-2,4,6-trideoxy-D-glucose. This is dTDP-4-dehydro-2,3,6-trideoxy-D-glucose 4-aminotransferase from Saccharopolyspora spinosa.